A 199-amino-acid polypeptide reads, in one-letter code: Peptidyl-tRNA hydrolase (199 aa).

Tyr-15 contributes to the tRNA binding site. His-20 acts as the Proton acceptor in catalysis. TRNA is bound by residues Tyr-66, Asn-68, and Asn-114.

It belongs to the PTH family. Monomer.

It is found in the cytoplasm. It carries out the reaction an N-acyl-L-alpha-aminoacyl-tRNA + H2O = an N-acyl-L-amino acid + a tRNA + H(+). Hydrolyzes ribosome-free peptidyl-tRNAs (with 1 or more amino acids incorporated), which drop off the ribosome during protein synthesis, or as a result of ribosome stalling. Functionally, catalyzes the release of premature peptidyl moieties from peptidyl-tRNA molecules trapped in stalled 50S ribosomal subunits, and thus maintains levels of free tRNAs and 50S ribosomes. The polypeptide is Peptidyl-tRNA hydrolase (Burkholderia cenocepacia (strain ATCC BAA-245 / DSM 16553 / LMG 16656 / NCTC 13227 / J2315 / CF5610) (Burkholderia cepacia (strain J2315))).